The sequence spans 156 residues: Small ribosomal subunit protein uS7 (156 aa).

Belongs to the universal ribosomal protein uS7 family. In terms of assembly, part of the 30S ribosomal subunit. Contacts proteins S9 and S11.

Functionally, one of the primary rRNA binding proteins, it binds directly to 16S rRNA where it nucleates assembly of the head domain of the 30S subunit. Is located at the subunit interface close to the decoding center, probably blocks exit of the E-site tRNA. In Trichormus variabilis (strain ATCC 29413 / PCC 7937) (Anabaena variabilis), this protein is Small ribosomal subunit protein uS7.